The primary structure comprises 310 residues: Vomeronasal type-1 receptor 50 (310 aa).

The Extracellular portion of the chain corresponds to 1-16; that stretch reads MSKANLLHTDNNMKIT. The helical transmembrane segment at 17–37 threads the bilayer; that stretch reads LFSEVSVGISANSILFVVHLC. Residues 38-50 are Cytoplasmic-facing; the sequence is KLLHENKPKPIDL. A helical transmembrane segment spans residues 51–71; the sequence is YIAFFSITQLMLLITMGLIAV. Topologically, residues 72–93 are extracellular; it reads DMFMPWGRWDSTTCQSLIYLHR. Cysteine 85 and cysteine 172 are oxidised to a cystine. A helical transmembrane segment spans residues 94–114; it reads LLRGLTFCATCLLNVLWTITL. At 115–134 the chain is on the cytoplasmic side; sequence SPRSSCLTKFKHKSPHHISG. Residues 135-155 traverse the membrane as a helical segment; the sequence is AFLFFCVLYMSFSSHLLVSII. Topologically, residues 156-193 are extracellular; that stretch reads ATFNSTSDNFLYVTQSCSILPVSYSRTSILSTMMTMRE. The N-linked (GlcNAc...) asparagine glycan is linked to asparagine 159. Residues 194–214 form a helical membrane-spanning segment; that stretch reads AFLIGLMALSSGYVVVLLWRH. Residues 215–237 lie on the Cytoplasmic side of the membrane; the sequence is KKQARHLHSTSLSSKASPEQRAT. Residues 238–258 form a helical membrane-spanning segment; it reads STIMLLMGFFVVLYILDTVIF. Residues 259-269 are Extracellular-facing; it reads QARLKFKDVST. Residues 270-290 traverse the membrane as a helical segment; it reads FFCVKIIISHSYATFSPFVFI. Topologically, residues 291–310 are cytoplasmic; it reads CNDKYMIKFVTSMCGRIVNV.

The protein belongs to the G-protein coupled receptor 1 family. As to expression, expressed in a subset of sensory neurons located in the apical layer of the vomeronasal organ.

Its subcellular location is the cell membrane. Putative pheromone receptor implicated in the regulation of social and reproductive behavior. The polypeptide is Vomeronasal type-1 receptor 50 (Vmn1r50) (Mus musculus (Mouse)).